A 375-amino-acid polypeptide reads, in one-letter code: Type II restriction enzyme ApaLI (375 aa).

The catalysed reaction is Endonucleolytic cleavage of DNA to give specific double-stranded fragments with terminal 5'-phosphates.. Functionally, a subtype P restriction enzyme that recognizes the double-stranded sequence 5'-GTGCAC-3' and cleaves after G-1. The polypeptide is Type II restriction enzyme ApaLI (Acetobacter pasteurianus (Acetobacter turbidans)).